The following is a 602-amino-acid chain: Serine/threonine-protein phosphatase 2A 56 kDa regulatory subunit delta isoform (602 aa).

Residues 1 to 13 show a composition bias toward basic and acidic residues; that stretch reads MPYKLKKEKEPPK. Residues 1-96 form a disordered region; that stretch reads MPYKLKKEKE…QSSSRFNLSK (96 aa). 5 tandem repeats follow at residues 37-38, 39-40, 41-42, 43-44, and 45-46. The interval 37–52 is 8 X 2 AA approximate tandem repeats of Q-P; that stretch reads QPQPQPQPQPQAQSQP. Over residues 46-55 the composition is skewed to low complexity; that stretch reads PQAQSQPPSS. The stretch at 47 to 48 is one 6; approximate repeat; sequence QA. The stretch at 49–50 is one 7; approximate repeat; the sequence is QS. Residues 51-52 form repeat 8; that stretch reads QP. At threonine 63 the chain carries Phosphothreonine. Phosphoserine is present on residues serine 88, serine 89, and serine 90. The short motif at 523-530 is the SH3-binding; class I element; that stretch reads RAPPPLPP. The Nuclear localization signal motif lies at 548–565; the sequence is KRTVETEAVQMLKDIKKE. Phosphoserine is present on residues serine 573 and serine 598.

The protein belongs to the phosphatase 2A regulatory subunit B56 family. As to quaternary structure, PP2A consists of a common heterodimeric core enzyme, composed of a 36 kDa catalytic subunit (subunit C) and a 65 kDa constant regulatory subunit (PR65 or subunit A), that associates with a variety of regulatory subunits. Proteins that associate with the core dimer include three families of regulatory subunits B (the R2/B/PR55/B55, R3/B''/PR72/PR130/PR59 and R5/B'/B56 families), the 48 kDa variable regulatory subunit, viral proteins, and cell signaling molecules. Interacts with the PP2A A subunit PPP2R1A. Interacts with SGO1. Interacts with ADCY8. As to expression, isoform Delta-2 is widely expressed. Isoform Delta-1 is highly expressed in brain.

The protein localises to the cytoplasm. Its subcellular location is the nucleus. In terms of biological role, the B regulatory subunit might modulate substrate selectivity and catalytic activity, and might also direct the localization of the catalytic enzyme to a particular subcellular compartment. This Homo sapiens (Human) protein is Serine/threonine-protein phosphatase 2A 56 kDa regulatory subunit delta isoform (PPP2R5D).